We begin with the raw amino-acid sequence, 459 residues long: Cell division protein FtsZ (459 aa).

GTP-binding positions include 25 to 29, 112 to 114, E143, R147, and D191; these read GAGSN and GTG. Disordered stretches follow at residues 383–405 and 427–459; these read DQAP…DAGE and IPER…KKRD.

Belongs to the FtsZ family. Homodimer. Polymerizes to form a dynamic ring structure in a strictly GTP-dependent manner. Interacts directly with several other division proteins.

It is found in the cytoplasm. Its function is as follows. Essential cell division protein that forms a contractile ring structure (Z ring) at the future cell division site. The regulation of the ring assembly controls the timing and the location of cell division. One of the functions of the FtsZ ring is to recruit other cell division proteins to the septum to produce a new cell wall between the dividing cells. Binds GTP and shows GTPase activity. The sequence is that of Cell division protein FtsZ from Rickettsia bellii (strain RML369-C).